The following is a 546-amino-acid chain: Chaperonin GroEL (546 aa).

Residues 29 to 32 (TMGP), Lys-50, 86 to 90 (DGTTT), Gly-414, and Asp-492 each bind ATP.

The protein belongs to the chaperonin (HSP60) family. Forms a cylinder of 14 subunits composed of two heptameric rings stacked back-to-back. Interacts with the co-chaperonin GroES.

The protein localises to the cytoplasm. The catalysed reaction is ATP + H2O + a folded polypeptide = ADP + phosphate + an unfolded polypeptide.. Functionally, together with its co-chaperonin GroES, plays an essential role in assisting protein folding. The GroEL-GroES system forms a nano-cage that allows encapsulation of the non-native substrate proteins and provides a physical environment optimized to promote and accelerate protein folding. This is Chaperonin GroEL from Helicobacter pylori (strain Shi470).